Reading from the N-terminus, the 154-residue chain is Small ribosomal subunit protein uS7 (154 aa).

It belongs to the universal ribosomal protein uS7 family.

This is Small ribosomal subunit protein uS7 (RPS5) from Nicotiana plumbaginifolia (Leadwort-leaved tobacco).